A 355-amino-acid chain; its full sequence is Uroporphyrinogen decarboxylase (355 aa).

Residues 38–42 (RQAGR), Asp-87, Tyr-162, Ser-217, and His-331 each bind substrate.

Belongs to the uroporphyrinogen decarboxylase family. In terms of assembly, homodimer.

The protein localises to the cytoplasm. The catalysed reaction is uroporphyrinogen III + 4 H(+) = coproporphyrinogen III + 4 CO2. Its pathway is porphyrin-containing compound metabolism; protoporphyrin-IX biosynthesis; coproporphyrinogen-III from 5-aminolevulinate: step 4/4. Catalyzes the decarboxylation of four acetate groups of uroporphyrinogen-III to yield coproporphyrinogen-III. The chain is Uroporphyrinogen decarboxylase from Streptomyces coelicolor (strain ATCC BAA-471 / A3(2) / M145).